A 269-amino-acid polypeptide reads, in one-letter code: Surfeit locus protein 4 (269 aa).

The next 5 helical transmembrane spans lie at 64-84 (FLAT…CVLV), 92-112 (YACF…SILW), 179-199 (FFSI…AVGF), 203-223 (LAAL…NAFW), and 242-262 (TTSV…GVSM). Positions 266 to 269 (KKEW) match the Di-lysine motif motif.

This sequence belongs to the SURF4 family.

It is found in the endoplasmic reticulum membrane. The protein resides in the endoplasmic reticulum-Golgi intermediate compartment membrane. Its subcellular location is the golgi apparatus membrane. Its function is as follows. Endoplasmic reticulum cargo receptor that mediates the export of lipoproteins by recruiting cargos into COPII vesicles to facilitate their secretion. In Danio rerio (Zebrafish), this protein is Surfeit locus protein 4.